A 206-amino-acid chain; its full sequence is Putative acetyltransferase OgpAT (206 aa).

Positions Val5–Asp205 constitute an N-acetyltransferase domain. Acetyl-CoA-binding positions include His135–Leu138, Gly144–Gly148, Asn175–Arg177, and His184.

Belongs to the acetyltransferase family. As to quaternary structure, monomer.

Its function is as follows. Binds acetyl-CoA, but not butyryl-CoA or decanoyl-CoA. May have acetyltransferase activity. In Oceanicola granulosus (strain ATCC BAA-861 / DSM 15982 / KCTC 12143 / HTCC2516), this protein is Putative acetyltransferase OgpAT.